The sequence spans 347 residues: UDP-3-O-acylglucosamine N-acyltransferase (347 aa).

The active-site Proton acceptor is histidine 242.

The protein belongs to the transferase hexapeptide repeat family. LpxD subfamily. Homotrimer.

The enzyme catalyses a UDP-3-O-[(3R)-3-hydroxyacyl]-alpha-D-glucosamine + a (3R)-hydroxyacyl-[ACP] = a UDP-2-N,3-O-bis[(3R)-3-hydroxyacyl]-alpha-D-glucosamine + holo-[ACP] + H(+). It functions in the pathway bacterial outer membrane biogenesis; LPS lipid A biosynthesis. In terms of biological role, catalyzes the N-acylation of UDP-3-O-acylglucosamine using 3-hydroxyacyl-ACP as the acyl donor. Is involved in the biosynthesis of lipid A, a phosphorylated glycolipid that anchors the lipopolysaccharide to the outer membrane of the cell. This chain is UDP-3-O-acylglucosamine N-acyltransferase, found in Dechloromonas aromatica (strain RCB).